The chain runs to 465 residues: NADH-quinone oxidoreductase subunit N (465 aa).

Transmembrane regions (helical) follow at residues 9–29 (FNFVLLFPVLSLLFWAIVLLL), 44–64 (ASIIALFSTLCFLLIYNGFVL), 73–93 (LFVSDNYAIFAQIVILVFSML), 110–130 (FLFMIASLILMISSTNLIVIF), 159–179 (YFTLAAVGAGFFVFACAFVYL), 198–218 (PILLCAGVMFLVIVGVKLSIA), 235–255 (FIAFISIVPKIAMIIVVLRIF), 265–285 (EYIVALLAIFSMLAVSIVALI), 292–312 (MLAYSSITHSSFILAVIVSSM), 327–347 (IFALFVYWISFAFANYGIFLI), 371–391 (IMLAIFILCIAGIPPFGIFWG), 405–427 (YALVFAVALSSMIMLYAYLKILI), and 444–464 (VKQKIILCLCLIGSVSCVFLL).

It belongs to the complex I subunit 2 family. As to quaternary structure, NDH-1 is composed of 14 different subunits. Subunits NuoA, H, J, K, L, M, N constitute the membrane sector of the complex.

The protein resides in the cell inner membrane. The catalysed reaction is a quinone + NADH + 5 H(+)(in) = a quinol + NAD(+) + 4 H(+)(out). Its function is as follows. NDH-1 shuttles electrons from NADH, via FMN and iron-sulfur (Fe-S) centers, to quinones in the respiratory chain. The immediate electron acceptor for the enzyme in this species is believed to be ubiquinone. Couples the redox reaction to proton translocation (for every two electrons transferred, four hydrogen ions are translocated across the cytoplasmic membrane), and thus conserves the redox energy in a proton gradient. In Campylobacter lari (strain RM2100 / D67 / ATCC BAA-1060), this protein is NADH-quinone oxidoreductase subunit N.